A 110-amino-acid polypeptide reads, in one-letter code: UPF0060 membrane protein Veis_0342 (110 aa).

A run of 4 helical transmembrane segments spans residues 8–28 (VLFTITAVVEIVGCYLPWLVI), 33–53 (PLWLLLPAALSLALFAWLLTL), 63–83 (AAYGGIYIAVALAWLHWVDGV), and 90–110 (VAGATVAMVGMLIIMLQPASA).

It belongs to the UPF0060 family.

It is found in the cell inner membrane. This chain is UPF0060 membrane protein Veis_0342, found in Verminephrobacter eiseniae (strain EF01-2).